A 110-amino-acid polypeptide reads, in one-letter code: Nucleoid-associated protein Sfri_2406 (110 aa).

The protein belongs to the YbaB/EbfC family. In terms of assembly, homodimer.

The protein localises to the cytoplasm. Its subcellular location is the nucleoid. Functionally, binds to DNA and alters its conformation. May be involved in regulation of gene expression, nucleoid organization and DNA protection. The protein is Nucleoid-associated protein Sfri_2406 of Shewanella frigidimarina (strain NCIMB 400).